The following is a 98-amino-acid chain: Citrate lyase acyl carrier protein (98 aa).

At S14 the chain carries O-(phosphoribosyl dephospho-coenzyme A)serine.

The protein belongs to the CitD family. Oligomer with a subunit composition of (alpha,beta,gamma)6.

The protein localises to the cytoplasm. In terms of biological role, covalent carrier of the coenzyme of citrate lyase. This is Citrate lyase acyl carrier protein from Shigella flexneri.